The chain runs to 456 residues: Trigger factor (456 aa).

One can recognise a PPIase FKBP-type domain in the interval 192–277 (GDTVVIDFVG…IHEVKTKEVP (86 aa)).

It belongs to the FKBP-type PPIase family. Tig subfamily.

The protein resides in the cytoplasm. The catalysed reaction is [protein]-peptidylproline (omega=180) = [protein]-peptidylproline (omega=0). Involved in protein export. Acts as a chaperone by maintaining the newly synthesized protein in an open conformation. Functions as a peptidyl-prolyl cis-trans isomerase. This chain is Trigger factor, found in Streptococcus pyogenes serotype M12 (strain MGAS9429).